We begin with the raw amino-acid sequence, 242 residues long: ATP-dependent dethiobiotin synthetase BioD (242 aa).

Residue Glu-12–Val-17 coordinates ATP. Residue Thr-16 participates in Mg(2+) binding. Residue Lys-37 is part of the active site. Residue Ser-41 coordinates substrate. Residues Asp-51 and Glu-112–Gly-115 contribute to the ATP site. Residues Asp-51 and Glu-112 each coordinate Mg(2+).

The protein belongs to the dethiobiotin synthetase family. Homodimer. Requires Mg(2+) as cofactor.

The protein localises to the cytoplasm. The catalysed reaction is (7R,8S)-7,8-diammoniononanoate + CO2 + ATP = (4R,5S)-dethiobiotin + ADP + phosphate + 3 H(+). It participates in cofactor biosynthesis; biotin biosynthesis; biotin from 7,8-diaminononanoate: step 1/2. In terms of biological role, catalyzes a mechanistically unusual reaction, the ATP-dependent insertion of CO2 between the N7 and N8 nitrogen atoms of 7,8-diaminopelargonic acid (DAPA, also called 7,8-diammoniononanoate) to form a ureido ring. This Bacillus cereus (strain AH820) protein is ATP-dependent dethiobiotin synthetase BioD.